The sequence spans 582 residues: DNA mismatch repair protein MutL (582 aa).

Belongs to the DNA mismatch repair MutL/HexB family.

Its function is as follows. This protein is involved in the repair of mismatches in DNA. It is required for dam-dependent methyl-directed DNA mismatch repair. May act as a 'molecular matchmaker', a protein that promotes the formation of a stable complex between two or more DNA-binding proteins in an ATP-dependent manner without itself being part of a final effector complex. This Acidiphilium cryptum (strain JF-5) protein is DNA mismatch repair protein MutL.